The chain runs to 894 residues: Sorting nexin-14 (894 aa).

A PXA domain is found at 78–252 (SSKVDASLSE…LLIIFIDDSP (175 aa)). In terms of domain architecture, RGS spans 284 to 416 (ELKQIREQQD…CHSDEYFRQL (133 aa)). Ser496 is subject to Phosphoserine. In terms of domain architecture, PX spans 518–638 (PYVDFFEDPS…DFLSPNGGET (121 aa)).

This sequence belongs to the sorting nexin family.

It localises to the cytoplasm. The protein resides in the cell projection. Its subcellular location is the dendrite. Its function is as follows. Plays a role in maintaining normal neuronal excitability and synaptic transmission. May be involved in several stages of intracellular trafficking. The chain is Sorting nexin-14 (SNX14) from Pongo abelii (Sumatran orangutan).